The primary structure comprises 163 residues: UPF0262 protein RPB_4349 (163 aa).

Belongs to the UPF0262 family.

This Rhodopseudomonas palustris (strain HaA2) protein is UPF0262 protein RPB_4349.